The sequence spans 439 residues: Hemagglutinin-esterase (439 aa).

The N-terminal stretch at M1–V22 is a signal peptide. The interval T12–A132 is esterase domain 1. At F23 to V407 the chain is on the virion surface side. The active-site Nucleophile is S45. Cysteines 49 and 70 form a disulfide. N-linked (GlcNAc...) asparagine; by host glycosylation is present at N94. C118 and C167 are oxidised to a cystine. The interval R133–Y281 is receptor binding. Residues N196, N246, N309, and N316 are each glycosylated (N-linked (GlcNAc...) asparagine; by host). Cystine bridges form between C202–C291 and C210–C264. The esterase domain 2 stretch occupies residues L282 to Y395. A disulfide bond links C322 and C327. The N-linked (GlcNAc...) asparagine; by host glycan is linked to N331. Active-site charge relay system residues include D342 and H345. N-linked (GlcNAc...) asparagine; by host glycosylation is found at N360 and N374. The cysteines at positions 363 and 387 are disulfide-linked. Residues V408–F428 form a helical membrane-spanning segment. Residues M429–A439 are Intravirion-facing.

The protein belongs to the influenza type C/coronaviruses hemagglutinin-esterase family. As to quaternary structure, homodimer; disulfide-linked. Forms a complex with the M protein in the pre-Golgi. Associates then with S-M complex to form a ternary complex S-M-HE. In terms of processing, N-glycosylated in the host RER.

It is found in the virion membrane. Its subcellular location is the host cell membrane. The catalysed reaction is N-acetyl-9-O-acetylneuraminate + H2O = N-acetylneuraminate + acetate + H(+). It carries out the reaction N-acetyl-4-O-acetylneuraminate + H2O = N-acetylneuraminate + acetate + H(+). Structural protein that makes short spikes at the surface of the virus. Contains receptor binding and receptor-destroying activities. Mediates de-O-acetylation of N-acetyl-4-O-acetylneuraminic acid, which is probably the receptor determinant recognized by the virus on the surface of erythrocytes and susceptible cells. This receptor-destroying activity is important for virus release as it probably helps preventing self-aggregation and ensures the efficient spread of the progeny virus from cell to cell. May serve as a secondary viral attachment protein for initiating infection, the spike protein being the major one. May become a target for both the humoral and the cellular branches of the immune system. In Murine coronavirus (strain JHM) (MHV-JHM), this protein is Hemagglutinin-esterase.